Consider the following 412-residue polypeptide: Alpha-1-antitrypsin 1-3 (412 aa).

An N-terminal signal peptide occupies residues 1 to 24; that stretch reads MTPSISWGLLLLAGLCCLVPSFLA. 3 N-linked (GlcNAc...) asparagine glycosylation sites follow: N64, N101, and N265. The interval 368–387 is RCL; it reads AVTVLLAVPYSMPPILRFDH.

It belongs to the serpin family.

The protein localises to the secreted. Inhibitor of serine proteases. Can inhibit trypsin and chymotrypsin; relatively ineffective against elastase. The sequence is that of Alpha-1-antitrypsin 1-3 (Serpina1c) from Mus musculus (Mouse).